Here is a 357-residue protein sequence, read N- to C-terminus: Alanine racemase (357 aa).

Lysine 33 serves as the catalytic Proton acceptor; specific for D-alanine. The residue at position 33 (lysine 33) is an N6-(pyridoxal phosphate)lysine. Residue arginine 129 coordinates substrate. Catalysis depends on tyrosine 253, which acts as the Proton acceptor; specific for L-alanine. Methionine 301 is a substrate binding site.

The protein belongs to the alanine racemase family. Pyridoxal 5'-phosphate is required as a cofactor.

It carries out the reaction L-alanine = D-alanine. It functions in the pathway amino-acid biosynthesis; D-alanine biosynthesis; D-alanine from L-alanine: step 1/1. Functionally, catalyzes the interconversion of L-alanine and D-alanine. May also act on other amino acids. This is Alanine racemase (alr) from Pseudomonas fluorescens (strain ATCC BAA-477 / NRRL B-23932 / Pf-5).